We begin with the raw amino-acid sequence, 399 residues long: Semaphorin-like protein 139 (399 aa).

The N-terminal stretch at 1-14 (MIPLLFILFYFTNC) is a signal peptide. Residues 15 to 399 (IEWHKFETSE…IPRMKKILKM (385 aa)) enclose the Sema domain.

The protein belongs to the semaphorin family. As to quaternary structure, interacts with host VESPR.

It localises to the secreted. Its function is as follows. Acts as a semaphorin-like protein and binds to host plexin C1 receptor. May alter the movement of plexin C1-expressing cells including dendritic cells, monocytes, or granulocytes in the proximity of infected cells. May also regulate host cell cytoskeleton of neighboring cells to improve viral infection. The sequence is that of Semaphorin-like protein 139 (EVM139) from Ectromelia virus (strain Moscow) (ECTV).